The primary structure comprises 250 residues: 5'-nucleotidase SurE (250 aa).

A divalent metal cation-binding residues include Asp8, Asp9, Ser40, and Asn95.

The protein belongs to the SurE nucleotidase family. It depends on a divalent metal cation as a cofactor.

It localises to the cytoplasm. The catalysed reaction is a ribonucleoside 5'-phosphate + H2O = a ribonucleoside + phosphate. In terms of biological role, nucleotidase that shows phosphatase activity on nucleoside 5'-monophosphates. The chain is 5'-nucleotidase SurE from Nitratidesulfovibrio vulgaris (strain DP4) (Desulfovibrio vulgaris).